The following is an 837-amino-acid chain: Tuftelin-interacting protein 11 (837 aa).

Basic and acidic residues-rich tracts occupy residues 1–13 and 44–64; these read MSLS…GEGH and QTKE…EERP. Disordered regions lie at residues 1 to 21, 34 to 73, and 85 to 135; these read MSLS…DDER, EFNP…RARD, and LKKG…FAGG. The segment at 1–50 is required for interaction with DHX15; it reads MSLSHLYRDGEGHLDDDDDERENFEITDWDLQNEFNPNRQRHWQTKEEAT. Phosphoserine is present on residues Ser-2, Ser-59, Ser-95, and Ser-98. Residues 91–100 show a composition bias toward acidic residues; the sequence is EEADSEDSDA. Basic and acidic residues predominate over residues 101 to 116; the sequence is EEKPVKQEDFPKDLGP. Phosphoserine is present on Ser-144. The region spanning 149-195 is the G-patch domain; the sequence is TKGIGQKLLQKMGYVPGRGLGKNAQGIINPIEAKQRKGKGAVGAYGS. The disordered stretch occupies residues 183–236; the sequence is QRKGKGAVGAYGSERTTQSLQDFPVADSEEEAEEEFQKELSQWRKDPSGSKKKP. Ser-210 bears the Phosphoserine mark. Residues 217-231 show a composition bias toward basic and acidic residues; sequence EFQKELSQWRKDPSG. A Nuclear localization signal motif is present at residues 700 to 705; that stretch reads VKDKFN. The segment at 710–734 is required for nuclear speckle localization; that stretch reads IMNRAVSSNVGAYMQPGARENIAYL.

This sequence belongs to the TFP11/STIP family. As to quaternary structure, identified in the spliceosome C complex. Found in the Intron Large (IL) complex, a post-mRNA release spliceosomal complex containing the excised intron, U2, U5 and U6 snRNPs, and splicing factors. Interacts with TUFT1. Interacts with DHX15; indicative for a recruitment of DHX15 to the IL complex. Interacts with GCFC2.

Its subcellular location is the cytoplasm. The protein resides in the nucleus. Its function is as follows. Involved in pre-mRNA splicing, specifically in spliceosome disassembly during late-stage splicing events. Intron turnover seems to proceed through reactions in two lariat-intron associated complexes termed Intron Large (IL) and Intron Small (IS). In cooperation with DHX15 seems to mediate the transition of the U2, U5 and U6 snRNP-containing IL complex to the snRNP-free IS complex leading to efficient debranching and turnover of excised introns. May play a role in the differentiation of ameloblasts and odontoblasts or in the forming of the enamel extracellular matrix. This chain is Tuftelin-interacting protein 11 (Tfip11), found in Rattus norvegicus (Rat).